The chain runs to 252 residues: Ribonuclease HII (252 aa).

The RNase H type-2 domain occupies 68–252 (EYVAGLDEVG…FGPVRDRLRS (185 aa)). Residues Asp-74, Glu-75, and Asp-165 each contribute to the a divalent metal cation site.

It belongs to the RNase HII family. Mn(2+) serves as cofactor. It depends on Mg(2+) as a cofactor.

Its subcellular location is the cytoplasm. The catalysed reaction is Endonucleolytic cleavage to 5'-phosphomonoester.. Its function is as follows. Endonuclease that specifically degrades the RNA of RNA-DNA hybrids. The chain is Ribonuclease HII from Lacticaseibacillus paracasei (strain ATCC 334 / BCRC 17002 / CCUG 31169 / CIP 107868 / KCTC 3260 / NRRL B-441) (Lactobacillus paracasei).